Reading from the N-terminus, the 501-residue chain is L-arabinose isomerase (501 aa).

The Mn(2+) site is built by Glu-306, Glu-333, His-350, and His-450.

The protein belongs to the arabinose isomerase family. In terms of assembly, homohexamer. It depends on Mn(2+) as a cofactor.

It carries out the reaction beta-L-arabinopyranose = L-ribulose. It participates in carbohydrate degradation; L-arabinose degradation via L-ribulose; D-xylulose 5-phosphate from L-arabinose (bacterial route): step 1/3. Catalyzes the conversion of L-arabinose to L-ribulose. The chain is L-arabinose isomerase from Pectobacterium atrosepticum (strain SCRI 1043 / ATCC BAA-672) (Erwinia carotovora subsp. atroseptica).